We begin with the raw amino-acid sequence, 305 residues long: Tetraspanin-12 (305 aa).

The Cytoplasmic portion of the chain corresponds to 1–12 (MAREDSVKCLRC). Residues Cys9 and Cys12 are each lipidated (S-palmitoyl cysteine). Residues 13 to 33 (LLYALNLLFWLMSISVLAVSA) form a helical membrane-spanning segment. The Extracellular portion of the chain corresponds to 34 to 59 (WMRDYLNNVLTLTAETRVEEAVILTY). A helical transmembrane segment spans residues 60–80 (FPVVHPVMIAVCCFLIIVGML). Residues 81–89 (GYCGTVKRN) are Cytoplasmic-facing. A lipid anchor (S-palmitoyl cysteine) is attached at Cys83. The chain crosses the membrane as a helical span at residues 90–110 (LLLLAWYFGTLLVIFCVELAC). Topologically, residues 111-224 (GVWTYEQEVM…RGTKQLQVLR (114 aa)) are extracellular. A helical membrane pass occupies residues 225–245 (FLGISIGVTQILAMILTITLL). Residues 246-305 (WALYYDRREPGTDQMLSLKNDTSQHLSCHSVELLKPSLSRIFEHTSMANSFNTHFEMEEL) are Cytoplasmic-facing.

It belongs to the tetraspanin (TM4SF) family. As to quaternary structure, interacts (when palmitoylated) with ADAM10. Interacts with MMP14/MT1-MMP. Component of a complex, at least composed of TSPAN12, FZD4 and norrin (NDP). In terms of processing, palmitoylated; required for interaction with ADAM10. Expressed in the neonatal retinal vasculature but not other retinal tissues. Also detected in the neonatal meningeal vasculature and in nonvascular cell types, such as the smooth muscle cells in the neonatal intestine.

It localises to the cell membrane. In terms of biological role, regulator of cell surface receptor signal transduction. Acts as a regulator of membrane proteinases such as ADAM10 and MMP14/MT1-MMP. Activates ADAM10-dependent cleavage activity of amyloid precursor protein (APP). Activates MMP14/MT1-MMP-dependent cleavage activity. Plays a central role in retinal vascularization by regulating norrin (NDP) signal transduction. Acts in concert with norrin (NDP) to promote FZD4 multimerization and subsequent activation of FZD4, leading to promote accumulation of beta-catenin (CTNNB1) and stimulate LEF/TCF-mediated transcriptional programs. Suprisingly, it only activate the norrin (NDP)-dependent activation of FZD4, while it does not activate the Wnt-dependent activation of FZD4, suggesting the existence of a Wnt-independent signaling that also promote accumulation the beta-catenin (CTNNB1). This is Tetraspanin-12 (Tspan12) from Mus musculus (Mouse).